The following is a 424-amino-acid chain: Protein pellino (424 aa).

The tract at residues 1–21 (MVKRTDGTESPILAEDGGDGH) is disordered. Serine 10 is modified (phosphoserine).

This sequence belongs to the pellino family. Interacts with pll.

Its function is as follows. Scaffold protein involved in the Toll signaling pathway via its interaction with pelle/pll kinase. This Drosophila melanogaster (Fruit fly) protein is Protein pellino (Pli).